A 168-amino-acid chain; its full sequence is Dihydrofolate reductase (168 aa).

The DHFR domain maps to methionine 1 to lysine 159. Isoleucine 5 to alanine 7 serves as a coordination point for substrate. NADP(+) contacts are provided by residues phenylalanine 6–alanine 7 and isoleucine 14–aspartate 19. Aspartate 27 serves as a coordination point for substrate. Glycine 43–threonine 46 is an NADP(+) binding site. A substrate-binding site is contributed by arginine 57. NADP(+)-binding positions include valine 62–alanine 65 and isoleucine 95–leucine 100. Threonine 114 provides a ligand contact to substrate.

This sequence belongs to the dihydrofolate reductase family.

It catalyses the reaction (6S)-5,6,7,8-tetrahydrofolate + NADP(+) = 7,8-dihydrofolate + NADPH + H(+). The protein operates within cofactor biosynthesis; tetrahydrofolate biosynthesis; 5,6,7,8-tetrahydrofolate from 7,8-dihydrofolate: step 1/1. Functionally, key enzyme in folate metabolism. Catalyzes an essential reaction for de novo glycine and purine synthesis, and for DNA precursor synthesis. The protein is Dihydrofolate reductase (dfrA) of Bacillus subtilis (strain 168).